The following is a 93-amino-acid chain: MITEKDVEHIGSLACIDLSPEETGLFAKQFNSILDYFRELDEVNTDGVEPTHHVIGLTNVFREDVAGESLTQEECIANAARKEKGFIKGPRIV.

It belongs to the GatC family. As to quaternary structure, heterotrimer of A, B and C subunits.

It carries out the reaction L-glutamyl-tRNA(Gln) + L-glutamine + ATP + H2O = L-glutaminyl-tRNA(Gln) + L-glutamate + ADP + phosphate + H(+). The catalysed reaction is L-aspartyl-tRNA(Asn) + L-glutamine + ATP + H2O = L-asparaginyl-tRNA(Asn) + L-glutamate + ADP + phosphate + 2 H(+). In terms of biological role, allows the formation of correctly charged Asn-tRNA(Asn) or Gln-tRNA(Gln) through the transamidation of misacylated Asp-tRNA(Asn) or Glu-tRNA(Gln) in organisms which lack either or both of asparaginyl-tRNA or glutaminyl-tRNA synthetases. The reaction takes place in the presence of glutamine and ATP through an activated phospho-Asp-tRNA(Asn) or phospho-Glu-tRNA(Gln). The protein is Aspartyl/glutamyl-tRNA(Asn/Gln) amidotransferase subunit C of Methanocella arvoryzae (strain DSM 22066 / NBRC 105507 / MRE50).